The primary structure comprises 427 residues: 3-phosphoshikimate 1-carboxyvinyltransferase (427 aa).

3-phosphoshikimate is bound by residues lysine 20, serine 21, and arginine 25. Residue lysine 20 participates in phosphoenolpyruvate binding. Residues glycine 92 and arginine 120 each coordinate phosphoenolpyruvate. 3-phosphoshikimate is bound by residues serine 166, glutamine 168, aspartate 312, and lysine 339. Glutamine 168 is a binding site for phosphoenolpyruvate. Aspartate 312 functions as the Proton acceptor in the catalytic mechanism. Phosphoenolpyruvate contacts are provided by arginine 343 and arginine 385.

The protein belongs to the EPSP synthase family. In terms of assembly, monomer.

Its subcellular location is the cytoplasm. The enzyme catalyses 3-phosphoshikimate + phosphoenolpyruvate = 5-O-(1-carboxyvinyl)-3-phosphoshikimate + phosphate. The protein operates within metabolic intermediate biosynthesis; chorismate biosynthesis; chorismate from D-erythrose 4-phosphate and phosphoenolpyruvate: step 6/7. Catalyzes the transfer of the enolpyruvyl moiety of phosphoenolpyruvate (PEP) to the 5-hydroxyl of shikimate-3-phosphate (S3P) to produce enolpyruvyl shikimate-3-phosphate and inorganic phosphate. This is 3-phosphoshikimate 1-carboxyvinyltransferase from Streptococcus equi subsp. zooepidemicus (strain MGCS10565).